A 593-amino-acid polypeptide reads, in one-letter code: Zinc metalloproteinase-disintegrin-like kaouthiagin-like (593 aa).

The N-terminal stretch at Met1–Ser20 is a signal peptide. Positions Ile21 to Glu196 are excised as a propeptide. The 196-residue stretch at Lys205–Pro400 folds into the Peptidase M12B domain. Ca(2+) contacts are provided by Glu208 and Asp292. Cystine bridges form between Cys316–Cys395, Cys356–Cys379, and Cys358–Cys363. An N-linked (GlcNAc...) asparagine glycan is attached at Asn319. The Zn(2+) site is built by His341, His345, and His351. 8 residues coordinate Ca(2+): Cys395, Asn398, Ile410, Asn413, Phe415, Glu417, Glu420, and Asp423. A Disintegrin domain is found at Pro408–Asn477. 12 cysteine pairs are disulfide-bonded: Cys411-Cys440, Cys422-Cys435, Cys424-Cys430, Cys434-Cys462, Cys449-Cys469, Cys456-Cys488, Cys481-Cys493, Cys500-Cys550, Cys515-Cys558, Cys528-Cys538, Cys545-Cys581, and Cys575-Cys586. A D/ECD-tripeptide motif is present at residues Asp455 to Asp457. Asp457, Leu458, Glu460, Asp472, and Ser473 together coordinate Ca(2+). Asn490 is a glycosylation site (N-linked (GlcNAc...) asparagine).

The protein belongs to the venom metalloproteinase (M12B) family. P-III subfamily. P-IIIa sub-subfamily. Monomer. Requires Zn(2+) as cofactor. In terms of tissue distribution, expressed by the venom gland.

It is found in the secreted. Functionally, snake venom zinc metalloproteinase that cleaves the membrane-bound precursor of TNF-alpha (TNF) into its mature soluble form showing the same digestion pattern than ADAM17. In Naja atra (Chinese cobra), this protein is Zinc metalloproteinase-disintegrin-like kaouthiagin-like.